Consider the following 636-residue polypeptide: Eisosome protein sle1 (636 aa).

Residues 1–297 are required for targeting the protein to eisosomes; sequence MSHASKNYNA…HVIIYENKEG (297 aa). 6 disordered regions span residues 111–205, 222–284, 313–387, 400–451, 467–550, and 572–604; these read ANYM…SPAN, YSPS…VPPV, DPSG…TQHF, QYYQ…QPSL, DITP…VNNA, and PSNHAYSEGRSYTFTGGQPPSVPTMPYGSRFAN. 5 stretches are compositionally biased toward polar residues: residues 131–159, 166–178, 188–204, 237–255, and 315–354; these read PSQQVRPSTSRSPSYASYNSEEVNFQSYQ, RTSQMYMPDNNYS, RRSSSYMVPANSRGSPA, SYNNVQRSSTVRNNTTQKS, and SGSNQASLRSTSTIHYTPSSKRISVIPPNTSNIGSRVVSR. The segment covering 355–383 has biased composition (low complexity); it reads SGQNNNQPAQPGQYNQQSQPVQSYQSGQS. Polar residues-rich tracts occupy residues 400 to 412 and 422 to 439; these read QYYQPSSPVQPVQ and PVQSTQYYQPSSPVQPVQ. Residues 471-484 are compositionally biased toward low complexity; sequence TASSTTANNAYASA. Residues 503-512 show a composition bias toward basic and acidic residues; it reads SFERERDSGR. Residues 572–589 show a composition bias toward polar residues; sequence PSNHAYSEGRSYTFTGGQ.

As to quaternary structure, component of eisosomes, large cytoplasmic protein assemblies that localize to specialized domains termed MCCs on the plasma membrane.

It is found in the cytoplasm. It localises to the cell cortex. The protein localises to the cell tip. Its function is as follows. Important for the biogenesis of filamentous eisosomes, large cytoplasmic protein assemblies that localize to specialized domains on the plasma membrane to cluster specific proteins at sites of membrane invaginations. This Schizosaccharomyces pombe (strain 972 / ATCC 24843) (Fission yeast) protein is Eisosome protein sle1 (sle1).